Reading from the N-terminus, the 180-residue chain is MIIYLHGFDSNSPGNHEKVLQLQFIDPDVRLVSYSTRHPKHDMQHLLKEVDKMLQLNVDERPLICGVGLGGYWAERIGFLCDIRQVVFNPNLFPYENMEGKIDRPEEYADIATKCVTNFREKNRDRCLVILSRHDEALDSQRSAQALHPYYEIVWDEEQTHKFKNISPHLQRIKAFKTLG.

The protein belongs to the UPF0227 family.

The chain is UPF0227 protein YcfP from Salmonella choleraesuis (strain SC-B67).